The chain runs to 329 residues: Carbonic anhydrase (329 aa).

The segment at 1 to 108 (MSTASAFAIN…AAARIDQITA (108 aa)) is chloroplast transit peptide-like.

The protein belongs to the beta-class carbonic anhydrase family. Homohexamer.

It localises to the cytoplasm. It catalyses the reaction hydrogencarbonate + H(+) = CO2 + H2O. Functionally, reversible hydration of carbon dioxide. This chain is Carbonic anhydrase, found in Flaveria pringlei.